Here is a 615-residue protein sequence, read N- to C-terminus: Dihydroxy-acid dehydratase (615 aa).

Mg(2+) is bound at residue Asp81. Position 122 (Cys122) interacts with [2Fe-2S] cluster. Residues Asp123 and Lys124 each coordinate Mg(2+). N6-carboxylysine is present on Lys124. Position 195 (Cys195) interacts with [2Fe-2S] cluster. Glu491 contacts Mg(2+). Catalysis depends on Ser517, which acts as the Proton acceptor.

This sequence belongs to the IlvD/Edd family. As to quaternary structure, homodimer. It depends on [2Fe-2S] cluster as a cofactor. Mg(2+) serves as cofactor.

It catalyses the reaction (2R)-2,3-dihydroxy-3-methylbutanoate = 3-methyl-2-oxobutanoate + H2O. It carries out the reaction (2R,3R)-2,3-dihydroxy-3-methylpentanoate = (S)-3-methyl-2-oxopentanoate + H2O. Its pathway is amino-acid biosynthesis; L-isoleucine biosynthesis; L-isoleucine from 2-oxobutanoate: step 3/4. It functions in the pathway amino-acid biosynthesis; L-valine biosynthesis; L-valine from pyruvate: step 3/4. In terms of biological role, functions in the biosynthesis of branched-chain amino acids. Catalyzes the dehydration of (2R,3R)-2,3-dihydroxy-3-methylpentanoate (2,3-dihydroxy-3-methylvalerate) into 2-oxo-3-methylpentanoate (2-oxo-3-methylvalerate) and of (2R)-2,3-dihydroxy-3-methylbutanoate (2,3-dihydroxyisovalerate) into 2-oxo-3-methylbutanoate (2-oxoisovalerate), the penultimate precursor to L-isoleucine and L-valine, respectively. In Novosphingobium aromaticivorans (strain ATCC 700278 / DSM 12444 / CCUG 56034 / CIP 105152 / NBRC 16084 / F199), this protein is Dihydroxy-acid dehydratase.